The sequence spans 447 residues: tRNA modification GTPase MnmE (447 aa).

Residues arginine 24, glutamate 81, and lysine 120 each contribute to the (6S)-5-formyl-5,6,7,8-tetrahydrofolate site. The TrmE-type G domain maps to 216-371; the sequence is GLNVVIAGKP…LRKELSDIAG (156 aa). Asparagine 226 is a K(+) binding site. GTP-binding positions include 226-231, 245-251, and 270-273; these read NAGKSS, TDIAGTT, and DTAG. Residue serine 230 coordinates Mg(2+). Threonine 245, isoleucine 247, and threonine 250 together coordinate K(+). A Mg(2+)-binding site is contributed by threonine 251. Lysine 447 lines the (6S)-5-formyl-5,6,7,8-tetrahydrofolate pocket.

The protein belongs to the TRAFAC class TrmE-Era-EngA-EngB-Septin-like GTPase superfamily. TrmE GTPase family. As to quaternary structure, homodimer. Heterotetramer of two MnmE and two MnmG subunits. It depends on K(+) as a cofactor.

The protein localises to the cytoplasm. In terms of biological role, exhibits a very high intrinsic GTPase hydrolysis rate. Involved in the addition of a carboxymethylaminomethyl (cmnm) group at the wobble position (U34) of certain tRNAs, forming tRNA-cmnm(5)s(2)U34. The protein is tRNA modification GTPase MnmE of Ruthia magnifica subsp. Calyptogena magnifica.